The sequence spans 421 residues: 3-isopropylmalate dehydratase large subunit (421 aa).

Residues cysteine 300, cysteine 360, and cysteine 363 each coordinate [4Fe-4S] cluster.

Belongs to the aconitase/IPM isomerase family. LeuC type 2 subfamily. In terms of assembly, heterodimer of LeuC and LeuD. Requires [4Fe-4S] cluster as cofactor.

The catalysed reaction is (2R,3S)-3-isopropylmalate = (2S)-2-isopropylmalate. The protein operates within amino-acid biosynthesis; L-leucine biosynthesis; L-leucine from 3-methyl-2-oxobutanoate: step 2/4. In terms of biological role, catalyzes the isomerization between 2-isopropylmalate and 3-isopropylmalate, via the formation of 2-isopropylmaleate. This is 3-isopropylmalate dehydratase large subunit from Moorella thermoacetica (strain ATCC 39073 / JCM 9320).